The sequence spans 327 residues: DNA-directed RNA polymerase subunit alpha (327 aa).

The tract at residues methionine 1 to glutamate 233 is alpha N-terminal domain (alpha-NTD). Residues threonine 264–lysine 327 form an alpha C-terminal domain (alpha-CTD) region.

It belongs to the RNA polymerase alpha chain family. As to quaternary structure, in plastids the minimal PEP RNA polymerase catalytic core is composed of four subunits: alpha, beta, beta', and beta''. When a (nuclear-encoded) sigma factor is associated with the core the holoenzyme is formed, which can initiate transcription.

It is found in the plastid. The protein resides in the chloroplast. The catalysed reaction is RNA(n) + a ribonucleoside 5'-triphosphate = RNA(n+1) + diphosphate. Functionally, DNA-dependent RNA polymerase catalyzes the transcription of DNA into RNA using the four ribonucleoside triphosphates as substrates. This Capsella bursa-pastoris (Shepherd's purse) protein is DNA-directed RNA polymerase subunit alpha.